The sequence spans 161 residues: Globin CTT-VIIB-4 (161 aa).

A signal peptide spans 1–16 (MKFFAVLALCIVGAIA). Positions 18–161 (PLTADEASLV…NTMAVAVAHL (144 aa)) constitute a Globin domain. Heme b contacts are provided by His-76 and His-111.

The protein belongs to the globin family. Homodimer.

The protein is Globin CTT-VIIB-4 (CTT-7B4) of Chironomus thummi thummi (Midge).